The following is a 293-amino-acid chain: Nucleotide-binding protein HRM2_27900 (293 aa).

11–18 serves as a coordination point for ATP; that stretch reads GLSGSGKS. 62-65 is a binding site for GTP; the sequence is DIRA.

Belongs to the RapZ-like family.

Its function is as follows. Displays ATPase and GTPase activities. This is Nucleotide-binding protein HRM2_27900 from Desulforapulum autotrophicum (strain ATCC 43914 / DSM 3382 / VKM B-1955 / HRM2) (Desulfobacterium autotrophicum).